We begin with the raw amino-acid sequence, 415 residues long: Probable glucuronosyltransferase Os03g0287800 (415 aa).

Residues 1–25 (MGSSTDHGGAGGRGKKGSGSQLWKK) lie on the Cytoplasmic side of the membrane. The chain crosses the membrane as a helical; Signal-anchor for type II membrane protein span at residues 26–43 (ALLHSSLCFVMGFFTGFA). The Lumenal portion of the chain corresponds to 44-415 (PSSVSDWTSA…GGRFLSGDFC (372 aa)). Residues Asn-78, Asn-165, Asn-257, and Asn-287 are each glycosylated (N-linked (GlcNAc...) asparagine).

Belongs to the glycosyltransferase 43 family.

It localises to the golgi apparatus membrane. Its function is as follows. Involved in the synthesis of glucuronoxylan hemicellulose in secondary cell walls. The chain is Probable glucuronosyltransferase Os03g0287800 from Oryza sativa subsp. japonica (Rice).